Reading from the N-terminus, the 165-residue chain is Nucleotide-binding protein P9215_05621 (165 aa).

Belongs to the YajQ family.

Its function is as follows. Nucleotide-binding protein. The protein is Nucleotide-binding protein P9215_05621 of Prochlorococcus marinus (strain MIT 9215).